The sequence spans 356 residues: Peptide chain release factor 1 (356 aa).

Gln-233 carries the post-translational modification N5-methylglutamine.

It belongs to the prokaryotic/mitochondrial release factor family. In terms of processing, methylated by PrmC. Methylation increases the termination efficiency of RF1.

The protein resides in the cytoplasm. Peptide chain release factor 1 directs the termination of translation in response to the peptide chain termination codons UAG and UAA. The sequence is that of Peptide chain release factor 1 from Halalkalibacterium halodurans (strain ATCC BAA-125 / DSM 18197 / FERM 7344 / JCM 9153 / C-125) (Bacillus halodurans).